Here is a 289-residue protein sequence, read N- to C-terminus: RING-H2 finger protein ATL29 (289 aa).

The helical transmembrane segment at 25-45 (VILTVILLVFFFIGFFTLYFC) threads the bilayer. The segment at 110 to 152 (CAICLLEFDGDHVLRLLTTCYHVFHQECIDLWFESHRTCPVCR) adopts an RING-type; atypical zinc-finger fold. The tract at residues 179–237 (TSDDEEDDHHRQQTTTQIDTWPSSGQTSSIKKEQNLPEKFSRSHSTGHSIVRNKPEEED) is disordered. Residues 191-207 (QTTTQIDTWPSSGQTSS) show a composition bias toward polar residues. Over residues 208–219 (IKKEQNLPEKFS) the composition is skewed to basic and acidic residues.

This sequence belongs to the RING-type zinc finger family. ATL subfamily.

It is found in the membrane. It catalyses the reaction S-ubiquitinyl-[E2 ubiquitin-conjugating enzyme]-L-cysteine + [acceptor protein]-L-lysine = [E2 ubiquitin-conjugating enzyme]-L-cysteine + N(6)-ubiquitinyl-[acceptor protein]-L-lysine.. It participates in protein modification; protein ubiquitination. This Arabidopsis thaliana (Mouse-ear cress) protein is RING-H2 finger protein ATL29 (ATL29).